Here is a 315-residue protein sequence, read N- to C-terminus: Ribose-phosphate pyrophosphokinase (315 aa).

ATP-binding positions include 37–39 (DGE) and 96–97 (RQ). Residues H131 and D170 each coordinate Mg(2+). K194 is a catalytic residue. Residues R196, D220, and 224-228 (DTGGT) contribute to the D-ribose 5-phosphate site.

Belongs to the ribose-phosphate pyrophosphokinase family. Class I subfamily. In terms of assembly, homohexamer. It depends on Mg(2+) as a cofactor.

The protein localises to the cytoplasm. The enzyme catalyses D-ribose 5-phosphate + ATP = 5-phospho-alpha-D-ribose 1-diphosphate + AMP + H(+). Its pathway is metabolic intermediate biosynthesis; 5-phospho-alpha-D-ribose 1-diphosphate biosynthesis; 5-phospho-alpha-D-ribose 1-diphosphate from D-ribose 5-phosphate (route I): step 1/1. Involved in the biosynthesis of the central metabolite phospho-alpha-D-ribosyl-1-pyrophosphate (PRPP) via the transfer of pyrophosphoryl group from ATP to 1-hydroxyl of ribose-5-phosphate (Rib-5-P). This Buchnera aphidicola subsp. Acyrthosiphon pisum (strain APS) (Acyrthosiphon pisum symbiotic bacterium) protein is Ribose-phosphate pyrophosphokinase.